A 495-amino-acid chain; its full sequence is Neuronal acetylcholine receptor subunit beta-4 (495 aa).

The signal sequence occupies residues 1-20; sequence MRGTPLLLVSLFSLLQDGDC. At 21-235 the chain is on the extracellular side; that stretch reads RLANAEEKLM…IIKRKPLFYT (215 aa). 4 N-linked (GlcNAc...) asparagine glycosylation sites follow: asparagine 35, asparagine 92, asparagine 137, and asparagine 165. A disulfide bond links cysteine 152 and cysteine 166. The chain crosses the membrane as a helical span at residues 236–256; sequence INLIIPCVLITSLAILVFYLP. At 257–264 the chain is on the cytoplasmic side; sequence SDCGEKMT. Glutamate 261 serves as a coordination point for Na(+). A helical transmembrane segment spans residues 265 to 285; it reads LCISVLLALTFFLLLISKIVP. Topologically, residues 286–297 are extracellular; sequence PTSLDIPLIGKY. Residues 298–318 traverse the membrane as a helical segment; the sequence is LLFTMVLVTFSIVTTVCVLNV. Residues 319–463 lie on the Cytoplasmic side of the membrane; it reads HHRSPSTHTM…WKFVAMVVDR (145 aa). The helical transmembrane segment at 464–484 threads the bilayer; that stretch reads LFLWVFVFVCILGTMGLFLPP. At 485–495 the chain is on the extracellular side; sequence LFQIHAPSKDS.

It belongs to the ligand-gated ion channel (TC 1.A.9) family. Acetylcholine receptor (TC 1.A.9.1) subfamily. Beta-4/CHRNB4 sub-subfamily. Neuronal AChR is composed of two different types of subunits: alpha and beta. CHRNB4/Beta-4 subunit can be combined to CHRNA2/alpha-2, CHRNA3/alpha-3 or CHRNA4/alpha-4, CHRNA5/alpha-5 and CHRNB3/beta-3 to give rise to functional receptors. Forms stoichiometries such as (CHRNA3)2:(CHRNB4)3 or (CHRNA3:CHRNB4)2:CHRNB3. Interacts with RIC3; which is required for proper folding and assembly. Interacts with LYPD6. In the brain, it is detected in the medial habenula. In the peripheral nervous system, it is found at least in the adrenal gland.

The protein resides in the synaptic cell membrane. The protein localises to the cell membrane. It carries out the reaction Ca(2+)(in) = Ca(2+)(out). The enzyme catalyses K(+)(in) = K(+)(out). The catalysed reaction is Na(+)(in) = Na(+)(out). Activated by a myriad of ligands such as acetylcholine, cytisine, nicotine, choline and epibatidine. nAChR activity is inhibited by the antagonist alpha-conotoxins BuIA and MII, small disulfide-constrained peptides from cone snails. The heteropentamer CHRNA3:CHRNB4 activity is blocked by the alpha-conotoxin ImI and AuIB. Its function is as follows. Component of neuronal acetylcholine receptors (nAChRs) that function as pentameric, ligand-gated cation channels with high calcium permeability among other activities. nAChRs are excitatory neurotrasnmitter receptors formed by a collection of nAChR subunits known to mediate synaptic transmission in the nervous system and the neuromuscular junction. Each nAchR subunit confers differential attributes to channel properties, including activation, deactivation and desensitization kinetics, pH sensitivity, cation permeability, and binding to allosteric modulators. CHRNB4 forms heteropentameric neuronal acetylcholine receptors with CHRNA2, CHRNA3 and CHRNA4, as well as CHRNA5 and CHRNB3 as accesory subunits. CHRNA3:CHRNB4 being predominant in neurons of the autonomic ganglia, it is known as ganglionic nicotinic receptor. CHRNA3:CHRNB4 or CHRNA3:CHRNA5:CHRNB4 play also an important role in the habenulo-interpeduncular tract, modulating the mesolimbic dopamine system and affecting reward circuits and addiction. Hypothalamic CHRNA3:CHRNB4 nAChR activation by nicotine leads to activation of POMC neurons and a decrease in food intake. This chain is Neuronal acetylcholine receptor subunit beta-4 (Chrnb4), found in Rattus norvegicus (Rat).